We begin with the raw amino-acid sequence, 163 residues long: Shikimate kinase (163 aa).

Residue 10-15 (GVGKTT) coordinates ATP. Residue Thr-14 coordinates Mg(2+). Substrate contacts are provided by Asp-28, Arg-52, and Gly-75. Arg-116 lines the ATP pocket. Arg-134 lines the substrate pocket. Residue Arg-151 coordinates ATP.

Belongs to the shikimate kinase family. In terms of assembly, monomer. It depends on Mg(2+) as a cofactor.

It localises to the cytoplasm. The enzyme catalyses shikimate + ATP = 3-phosphoshikimate + ADP + H(+). The protein operates within metabolic intermediate biosynthesis; chorismate biosynthesis; chorismate from D-erythrose 4-phosphate and phosphoenolpyruvate: step 5/7. Catalyzes the specific phosphorylation of the 3-hydroxyl group of shikimic acid using ATP as a cosubstrate. The polypeptide is Shikimate kinase (Streptococcus pyogenes serotype M4 (strain MGAS10750)).